Reading from the N-terminus, the 226-residue chain is MACLEIPQQPQLVCQKATPSDPAGCDGGPGGPTEGDLECLVCREPYSGVRPPKLLGCQHAFCAVCLKLLLCVQDDAWSIPCPLCRKVTAVPGGLVCTLRDQEKVLERLARPGLEVPLRPQGLANPATLTAGQPREAGEEEQDAVTTNRAAARRLAAHLLLLVLLIILILPFIYPGVIRWVLSFLETLALLLALLFCSHPGQQDGCMPTPRTLFCRERKPSEIASIS.

Residues 39 to 85 form an RING-type zinc finger; that stretch reads CLVCREPYSGVRPPKLLGCQHAFCAVCLKLLLCVQDDAWSIPCPLCR. The interval 121-143 is disordered; sequence GLANPATLTAGQPREAGEEEQDA. Helical transmembrane passes span 157 to 177 and 179 to 199; these read HLLL…PGVI and WVLS…CSHP.

Interacts with BNIP1. Polyubiquitinated. 'Lys-29' autoubiquitination leads to proteasomal degradation.

Its subcellular location is the endoplasmic reticulum membrane. It carries out the reaction S-ubiquitinyl-[E2 ubiquitin-conjugating enzyme]-L-cysteine + [acceptor protein]-L-lysine = [E2 ubiquitin-conjugating enzyme]-L-cysteine + N(6)-ubiquitinyl-[acceptor protein]-L-lysine.. It participates in protein modification; protein ubiquitination. E3 ubiquitin protein ligase that is part of an apoptotic signaling pathway activated by endoplasmic reticulum stress. Stimulates the expression of proteins specific of the unfolded protein response (UPR), ubiquitinates BNIP1 and regulates its localization to the mitochondrion and induces calcium release from the endoplasmic reticulum that ultimately leads to cell apoptosis. Plays a role in the maintenance of intestinal homeostasis and clearance of enteric pathogens. Upon NOD2 stimulation, ubiquitinates the ER stress sensor activating transcription factor 6/ATF6 and promotes the unfolded protein response UPR. Participates in basal level of autophagy maintenance by regulating the ubiquitination of EPHB2. Upon stimulation by ligand EFNB1, ubiquitinates EPHB2 and further recruits MAP1LC3B for autophagy induction. Controls nutrient sensing by ubiquitinating Sestrin-2/SESN2, which is an intracellular sensor of cytosolic leucine and inhibitor of mTORC1 activity. This Bos taurus (Bovine) protein is E3 ubiquitin-protein ligase RNF186.